A 247-amino-acid chain; its full sequence is Probable dihydroorotate dehydrogenase B (NAD(+)), electron transfer subunit (247 aa).

Positions Met-1 to Glu-87 constitute an FAD-binding FR-type domain. The [2Fe-2S] cluster site is built by Cys-200, Cys-205, Cys-208, and Cys-216.

Belongs to the PyrK family. Heterotetramer of 2 PyrK and 2 PyrD type B subunits. It depends on [2Fe-2S] cluster as a cofactor. The cofactor is FAD.

The protein operates within pyrimidine metabolism; UMP biosynthesis via de novo pathway; orotate from (S)-dihydroorotate (NAD(+) route): step 1/1. Responsible for channeling the electrons from the oxidation of dihydroorotate from the FMN redox center in the PyrD type B subunit to the ultimate electron acceptor NAD(+). The sequence is that of Probable dihydroorotate dehydrogenase B (NAD(+)), electron transfer subunit from Pyrococcus horikoshii (strain ATCC 700860 / DSM 12428 / JCM 9974 / NBRC 100139 / OT-3).